The primary structure comprises 805 residues: Leucine--tRNA ligase (805 aa).

Residues 40–51 (PYPSGAGLHVGH) carry the 'HIGH' region motif. The 'KMSKS' region motif lies at 576–580 (KMSKS). Position 579 (lysine 579) interacts with ATP.

Belongs to the class-I aminoacyl-tRNA synthetase family.

The protein resides in the cytoplasm. The enzyme catalyses tRNA(Leu) + L-leucine + ATP = L-leucyl-tRNA(Leu) + AMP + diphosphate. This is Leucine--tRNA ligase from Geobacillus kaustophilus (strain HTA426).